We begin with the raw amino-acid sequence, 137 residues long: Nucleoside diphosphate kinase (137 aa).

ATP contacts are provided by Lys9, Phe57, Arg85, Thr91, Arg102, and Asn112. His115 (pros-phosphohistidine intermediate) is an active-site residue.

Belongs to the NDK family. In terms of assembly, homotetramer. Mg(2+) is required as a cofactor.

The protein localises to the cytoplasm. It carries out the reaction a 2'-deoxyribonucleoside 5'-diphosphate + ATP = a 2'-deoxyribonucleoside 5'-triphosphate + ADP. The enzyme catalyses a ribonucleoside 5'-diphosphate + ATP = a ribonucleoside 5'-triphosphate + ADP. Its function is as follows. Major role in the synthesis of nucleoside triphosphates other than ATP. The ATP gamma phosphate is transferred to the NDP beta phosphate via a ping-pong mechanism, using a phosphorylated active-site intermediate. This is Nucleoside diphosphate kinase from Aliarcobacter butzleri (strain RM4018) (Arcobacter butzleri).